We begin with the raw amino-acid sequence, 664 residues long: tRNA uridine 5-carboxymethylaminomethyl modification enzyme MnmG (664 aa).

FAD contacts are provided by residues 14–19 (GGGHSG), V126, and S183. 277-291 (GPRYCPSIEDKIDRF) contacts NAD(+). Q374 serves as a coordination point for FAD.

Belongs to the MnmG family. In terms of assembly, homodimer. Heterotetramer of two MnmE and two MnmG subunits. FAD serves as cofactor.

The protein resides in the cytoplasm. NAD-binding protein involved in the addition of a carboxymethylaminomethyl (cmnm) group at the wobble position (U34) of certain tRNAs, forming tRNA-cmnm(5)s(2)U34. The polypeptide is tRNA uridine 5-carboxymethylaminomethyl modification enzyme MnmG (Salinibacter ruber (strain DSM 13855 / M31)).